The primary structure comprises 92 residues: UPF0235 protein PF1765 (92 aa).

This sequence belongs to the UPF0235 family.

This is UPF0235 protein PF1765 from Pyrococcus furiosus (strain ATCC 43587 / DSM 3638 / JCM 8422 / Vc1).